The following is a 185-amino-acid chain: Casparian strip membrane protein 5 (185 aa).

Topologically, residues 1–25 (MKAEAVESGEASTIIAAPKRGINRG) are cytoplasmic. Residues 26–46 (ISIADLILRGVAAIGTFASAL) form a helical membrane-spanning segment. The Extracellular segment spans residues 47–75 (TMGTTSETLTIFTQPIMIRAKYNDLPSLT). The helical transmembrane segment at 76–96 (FFVIANSIVCGYLVLSIPLSI) threads the bilayer. At 97–108 (SHFIRREARITR) the chain is on the cytoplasmic side. Residues 109-129 (IILVIFDTAMVELLTAGASAA) traverse the membrane as a helical segment. Residues 130-160 (TVVVYLAHKRNANWLAICQQFNNFCERISGS) are Extracellular-facing. A helical transmembrane segment spans residues 161–181 (LIGSFASIIMIMLIIITSAVA). At 182–185 (LSRH) the chain is on the cytoplasmic side.

It belongs to the Casparian strip membrane proteins (CASP) family. As to quaternary structure, homodimer and heterodimers.

The protein localises to the cell membrane. In terms of biological role, regulates membrane-cell wall junctions and localized cell wall deposition. Required for establishment of the Casparian strip membrane domain (CSD) and the subsequent formation of Casparian strips, a cell wall modification of the root endodermis that determines an apoplastic barrier between the intraorganismal apoplasm and the extraorganismal apoplasm and prevents lateral diffusion. The chain is Casparian strip membrane protein 5 from Populus trichocarpa (Western balsam poplar).